A 125-amino-acid polypeptide reads, in one-letter code: MQAVAAAAGMMRRGSLTIDPAGEEEAPAERVGRLVRESPVVVFARRGCYMAHVMRRLLAAVGAHATVIELEGGAAEEEEAALGGGAALPALFVGGDPVGGLEGLMGLHLSGRLVPRLREVGALCT.

The Glutaredoxin domain maps to 28 to 124; sequence AERVGRLVRE…PRLREVGALC (97 aa). Cysteine 48 contributes to the [2Fe-2S] cluster binding site.

It belongs to the glutaredoxin family. CC-type subfamily.

The protein resides in the cytoplasm. Functionally, may only reduce GSH-thiol disulfides, but not protein disulfides. The protein is Monothiol glutaredoxin-S2 (GRXS2) of Oryza sativa subsp. japonica (Rice).